Here is a 734-residue protein sequence, read N- to C-terminus: ABC transporter D family member 1 (734 aa).

The next 4 membrane-spanning stretches (helical) occupy residues 52–72 (IIKI…ILFG), 112–132 (FAIG…SIMA), 177–197 (FTTL…VVVY), and 204–224 (TTID…GYLI). Positions 63 to 351 (PLTLFLILFG…VEEEQAKIQF (289 aa)) constitute an ABC transmembrane type-1 domain. The segment covering 271–286 (HPEKRFDNNDYDHGYE) has biased composition (basic and acidic residues). The segment at 271 to 296 (HPEKRFDNNDYDHGYESDDSDQSCDE) is disordered. Residues 332 to 359 (DSNDQKEELLVEEEQAKIQFEALLKNKK) adopt a coiled-coil conformation. The chain crosses the membrane as a helical span at residues 374–394 (LFTYLSPIANYFIIAIPVFFL). In terms of domain architecture, ABC transporter spans 492–729 (ITLDDVTYFT…NNNNTNKIAE (238 aa)). 525–532 (GPSGSGKS) contacts ATP. The segment covering 712 to 725 (QSNNINNNNNNNTN) has biased composition (low complexity). The interval 712–734 (QSNNINNNNNNNTNKIAEDSVFD) is disordered.

This sequence belongs to the ABC transporter superfamily. ABCD family. Peroxisomal fatty acyl CoA transporter (TC 3.A.1.203) subfamily.

It localises to the membrane. It carries out the reaction (9Z)-octadecenoyl-CoA(in) = (9Z)-octadecenoyl-CoA(out). This Dictyostelium discoideum (Social amoeba) protein is ABC transporter D family member 1 (abcD1).